Consider the following 490-residue polypeptide: MFALTAYRLRCAAWLLATGIFLLLAGCSEAKAPTALERVQKEGVLRVITRNSPATYFQDRNGETGFEYELAKRFAERLGVELKIETADNLDDLYAQLSREGGPALAAAGLTPGREDDASVRYSHTYLDVTPQIIYRNGQQRPTRPEDLVGKRIMVLKGSSHAEQLAELKKQYPELKYEESDAVEVVDLLRMVDVGDIDLTLVDSNELAMNQVYFPNVRVAFDFGEARGLAWALPGGDDDSLMNEVNAFLDQAKKEGLLQRLKDRYYGHVDVLGYVGAYTFAQHLQQRLPRYESHFKQSGKQLDTDWRLLAAIGYQESLWQPGATSKTGVRGLMMLTNRTAQAMGVSNRLDPKQSIQGGSKYFVQIRSELPESIKEPDRSWFALAAYNIGGAHLEDARKMAEKEGLNPNKWLDVKKMLPRLAQKQWYAKTRYGYARGGETVHFVQNVRRYYDILTWVTQPQMEGSQIAESGLHLPGVNKTRPEEDSGDEKL.

Residues methionine 1 to alanine 32 form the signal peptide. The interval proline 33 to valine 269 is non-LT domain. Residues aspartate 270–leucine 490 form an LT domain region. Residue glutamate 316 is part of the active site. The interval alanine 467–leucine 490 is disordered. Residues threonine 479 to leucine 490 are compositionally biased toward basic and acidic residues.

It in the N-terminal section; belongs to the bacterial solute-binding protein 3 family. This sequence in the C-terminal section; belongs to the transglycosylase Slt family.

It localises to the cell outer membrane. The catalysed reaction is Exolytic cleavage of the (1-&gt;4)-beta-glycosidic linkage between N-acetylmuramic acid (MurNAc) and N-acetylglucosamine (GlcNAc) residues in peptidoglycan, from either the reducing or the non-reducing ends of the peptidoglycan chains, with concomitant formation of a 1,6-anhydrobond in the MurNAc residue.. Murein-degrading enzyme that degrades murein glycan strands and insoluble, high-molecular weight murein sacculi, with the concomitant formation of a 1,6-anhydromuramoyl product. Lytic transglycosylases (LTs) play an integral role in the metabolism of the peptidoglycan (PG) sacculus. Their lytic action creates space within the PG sacculus to allow for its expansion as well as for the insertion of various structures such as secretion systems and flagella. The sequence is that of Membrane-bound lytic murein transglycosylase F from Pseudomonas aeruginosa (strain ATCC 15692 / DSM 22644 / CIP 104116 / JCM 14847 / LMG 12228 / 1C / PRS 101 / PAO1).